A 362-amino-acid polypeptide reads, in one-letter code: Class I histocompatibility antigen, Gogo-B*0103 alpha chain (362 aa).

An N-terminal signal peptide occupies residues 1–24 (MRVTAPRTLLLLLSAALALTETWA). The tract at residues 25 to 114 (GSHSMRYFDT…ALRYYNQSEA (90 aa)) is alpha-1. The Extracellular segment spans residues 25 to 308 (GSHSMRYFDT…EPSSQSTIPI (284 aa)). An N-linked (GlcNAc...) asparagine glycan is attached at N110. The tract at residues 115–206 (GSHTIQWMYG…ENGRETLQRA (92 aa)) is alpha-2. Disulfide bonds link C125–C188 and C227–C283. The segment at 207-298 (DTPKTHVTHH…GLPKPLTLRW (92 aa)) is alpha-3. One can recognise an Ig-like C1-type domain in the interval 209 to 295 (PKTHVTHHPI…QHEGLPKPLT (87 aa)). The connecting peptide stretch occupies residues 299 to 308 (EPSSQSTIPI). The helical transmembrane segment at 309-332 (VGIVAGLAVLAVVVIGAVVTAVIC) threads the bilayer. Topologically, residues 333 to 362 (RRKSSGGKGGSYSQAASSDSAQGSDVSLTA) are cytoplasmic. Positions 335–362 (KSSGGKGGSYSQAASSDSAQGSDVSLTA) are disordered. Low complexity predominate over residues 343–362 (SYSQAASSDSAQGSDVSLTA).

This sequence belongs to the MHC class I family. Heterodimer of an alpha chain and a beta chain (beta-2-microglobulin).

It is found in the membrane. Functionally, involved in the presentation of foreign antigens to the immune system. This chain is Class I histocompatibility antigen, Gogo-B*0103 alpha chain, found in Gorilla gorilla gorilla (Western lowland gorilla).